The following is a 1353-amino-acid chain: Inhibitor of Bruton tyrosine kinase (1353 aa).

2 ANK repeats span residues 51 to 80 (FGRNALHLVSSCGKKGVLDWLIQKGVDLLV) and 85 to 114 (SGWTALHRSIFYGHIDCVWSLLKHGVSLYI). 3 RCC1 repeats span residues 141–194 (PTDV…FLSQ), 195–246 (KGQV…VLTE), and 248–301 (GCVY…LWTR). 2 consecutive BTB domains span residues 564-644 (HDVT…DFLT) and 768-836 (CDVT…VVIK). Residues 806–835 (SSCAALEMPIHSDILKVILDYLYTDEAVVI) form an ANK 3 repeat. Residues 970–1001 (HSETMFKKAKTKAKKKPRKRSDSSGGYNLSDI) form a disordered region. Positions 976–988 (KKAKTKAKKKPRK) are enriched in basic residues. Ser990 carries the phosphoserine modification. The segment covering 992–1001 (SSGGYNLSDI) has biased composition (polar residues). A phosphoserine mark is found at Ser1004, Ser1030, Ser1033, Ser1039, Ser1045, Ser1054, Ser1083, Ser1111, Ser1113, and Ser1116. Residues 1134 to 1155 (KCGATPKSHLGKTVSHGVKLSQ) form a disordered region.

As to quaternary structure, interacts with the PH domain of BTK. Isoform 2 does not interact with BTK. Expressed in DeFew, HEK293T, HeLa and in Jurkat, MC3 and NB4 lymphoid cells (at protein level). Isoform 1 is the predominant isoform expressed in all examined tissues and cell lines. Highly expressed in hemopoietic tissues (fetal liver, spleen, lymph node, thymus, peripheral blood leukocytes and bone marrow). Weakly or not expressed in other tissues.

The protein localises to the cytoplasm. It localises to the membrane. The protein resides in the nucleus. Its function is as follows. Acts as an inhibitor of BTK tyrosine kinase activity, thereby playing a role in B-cell development. Down-regulates BTK kinase activity, leading to interference with BTK-mediated calcium mobilization and NF-kappa-B-driven transcription. The protein is Inhibitor of Bruton tyrosine kinase (IBTK) of Homo sapiens (Human).